The primary structure comprises 277 residues: MSSGIHVALVTGGNKGIGLAIVRDLCRLFSGDVVLTARDVTRGQAAVQQLQAEGLSPRFHQLDIDDLQSIRALRDFLRKEYGGLDVLVNNAGIAFKVADPTPFHIQAEVTMKTNFFGTRDVCTELLPLIKPQGRVVNVSSIMSVRALKSCSPELQQKFRSETITEEELVGLMNKFVEDTKKGVHQKEGWPSSAYGVTKIGVTVLSRIHARKLSEQRKGDKILLNACCPGWVRTDMAGPKATKSPEEGAETPVYLALLPPDAEGPHGQFVSEKRVEQW.

Serine 2 is modified (N-acetylserine). Phosphoserine is present on residues serine 2 and serine 30. NADP(+) is bound by residues 10–34 (VTGG…GDVV), 63–64 (DI), and asparagine 90. Residues 95–97 (FKV) and glutamine 106 contribute to the glutathione site. Residue serine 140 participates in substrate binding. Residue 193 to 194 (AY) coordinates glutathione. The active-site Proton acceptor is the tyrosine 194. NADP(+) is bound by residues 194–198 (YGVTK) and 231–233 (VRT). Lysine 239 is subject to N6-1-carboxyethyl lysine.

It belongs to the short-chain dehydrogenases/reductases (SDR) family. Monomer. As to expression, expressed in kidney (at protein level).

It is found in the cytoplasm. The enzyme catalyses a secondary alcohol + NADP(+) = a ketone + NADPH + H(+). It carries out the reaction a primary alcohol + NADP(+) = an aldehyde + NADPH + H(+). It catalyses the reaction prostaglandin F2alpha + NADP(+) = prostaglandin E2 + NADPH + H(+). The catalysed reaction is prostaglandin E1 + NADP(+) = 15-oxoprostaglandin E1 + NADPH + H(+). The enzyme catalyses menadione + NADPH + H(+) = menadiol + NADP(+). It carries out the reaction prostaglandin D2 + NADP(+) = 15-oxoprostaglandin D2 + NADPH + H(+). It catalyses the reaction prostaglandin E2 + NADP(+) = 15-oxoprostaglandin E2 + NADPH + H(+). The catalysed reaction is prostaglandin F2alpha + NADP(+) = 15-oxoprostaglandin F2alpha + NADPH + H(+). The enzyme catalyses daunorubicin + NADPH + H(+) = 13-dihydrodaunorubicin + NADP(+). It carries out the reaction S-nitrosoglutathione + NADPH + H(+) = S-(hydroxysulfenamide)glutathione + NADP(+). It catalyses the reaction cortisol + NADPH + H(+) = 20beta-dihydrocortisol + NADP(+). The catalysed reaction is corticosterone + NADPH + H(+) = 20beta-dihydrocorticosterone + NADP(+). With respect to regulation, inhibited by quercetin, rutenin and its derivatives. Its function is as follows. NADPH-dependent reductase with broad substrate specificity. Catalyzes the reduction of a wide variety of carbonyl compounds including quinones, prostaglandins, menadione, plus various xenobiotics. Catalyzes the reduction of the antitumor anthracyclines doxorubicin and daunorubicin to the cardiotoxic compounds doxorubicinol and daunorubicinol. Can convert prostaglandin E to prostaglandin F2-alpha. Can bind glutathione, which explains its higher affinity for glutathione-conjugated substrates. Catalyzes the reduction of S-nitrosoglutathione. In addition, participates in the glucocorticoid metabolism by catalyzing the NADPH-dependent cortisol/corticosterone into 20beta-dihydrocortisol (20b-DHF) or 20beta-corticosterone (20b-DHB), which are weak agonists of NR3C1 and NR3C2 in adipose tissue. This chain is Carbonyl reductase [NADPH] 1, found in Homo sapiens (Human).